A 190-amino-acid chain; its full sequence is Bifunctional D-Ala-D-Ala dipeptidase and D-Ala-D-Ala carboxypeptidase VanXYC (190 aa).

E66 is a binding site for Mg(2+). 5 residues coordinate a dipeptide: Q67, A88, S93, H95, and D102. Cu(2+) contacts are provided by H95 and D102. 2 residues coordinate Zn(2+): H95 and D102. The catalytic acid/base residue role is filled by E153. A dipeptide is bound by residues W155 and H156. H156 contributes to the Cu(2+) binding site. Residue H156 coordinates Zn(2+).

It belongs to the peptidase M15D family. In terms of assembly, homodimer.

The protein resides in the cytoplasm. It catalyses the reaction D-alanyl-D-alanine + H2O = 2 D-alanine. The enzyme catalyses UDP-N-acetyl-alpha-D-muramoyl-L-alanyl-gamma-D-glutamyl-L-lysyl-D-alanyl-D-alanine + H2O = UDP-N-acetyl-alpha-D-muramoyl-L-alanyl-gamma-D-glutamyl-L-lysyl-D-alanine + D-alanine. Its function is as follows. Bifunctional enzyme, exhibiting dipeptidase and carboxypeptidase activities. Catalyzes hydrolysis of the D-alanyl-D-alanine dipeptide. Cleaves the C-terminal D-alanine residue of UDP-muramyl-pentapeptide[Ala] (UDP-MurNAc-L-Ala-D-Glu-L-Lys-D-Ala-D-Ala). Shows no activity against the pentapeptide with a C-terminal D-serine residue. Together with VanC/VanC1 and VanT, required for vancomycin resistance in E.gallinarum strain BM4174. This Enterococcus gallinarum protein is Bifunctional D-Ala-D-Ala dipeptidase and D-Ala-D-Ala carboxypeptidase VanXYC.